The following is a 374-amino-acid chain: Serpin B8 (374 aa).

This sequence belongs to the serpin family. Ov-serpin subfamily.

It localises to the cytoplasm. Its function is as follows. Has an important role in epithelial desmosome-mediated cell-cell adhesion. The protein is Serpin B8 (SERPINB8) of Homo sapiens (Human).